We begin with the raw amino-acid sequence, 517 residues long: MASDGARKQFWKRSNSKLPGSIQHVYGAQHPPFDPLLHGTLLRSTAKMPTTPVKAKRVSTFQEFESNTSDAWDAGEDDDELLAMAAESLNSEVVMETANRVLRNHSQRQGRPTLQEGPGLQQKPRPEAEPPSPPSGDLRLVKSVSESHTSCPAESASDAAPLQRSQSLPHSATVTLGGTSDPSTLSSSALSEREASRLDKFKQLLAGPNTDLEELRRLSWSGIPKPVRPMTWKLLSGYLPANVDRRPATLQRKQKEYFAFIEHYYDSRNDEVHQDTYRQIHIDIPRMSPEALILQPKVTEIFERILFIWAIRHPASGYVQGINDLVTPFFVVFICEYIEAEEVDTVDVSGVPAEVLCNIEADTYWCMSKLLDGIQDNYTFAQPGIQMKVKMLEELVSRIDEQVHRHLDQHEVRYLQFAFRWMNNLLMREVPLRCTIRLWDTYQSEPDGFSHFHLYVCAAFLVRWRKEILEEKDFQELLLFLQNLPTAHWDDEDISLLLAEAYRLKFAFADAPNHYKK.

An N-acetylalanine modification is found at alanine 2. The interval arginine 103 to serine 191 is disordered. Phosphoserine occurs at positions 132, 145, and 167. The segment covering glutamine 163 to valine 174 has biased composition (polar residues). Over residues leucine 176 to leucine 190 the composition is skewed to low complexity. The Rab-GAP TBC domain occupies glycine 222–proline 446.

As to quaternary structure, homodimer. Interacts with ACBD3 and ARFGEF1. Interacts with YWHAB, YWHAE, YWHAG, YWHAH, YWHAQ and YWHAZ.

May act as a GTPase-activating protein for Rab family protein(s). This is TBC1 domain family member 22A (TBC1D22A) from Homo sapiens (Human).